Here is a 921-residue protein sequence, read N- to C-terminus: Protein translocase subunit SecA (921 aa).

ATP is bound by residues glutamine 87, 105-109, and aspartate 515; that span reads GEGKT. Positions 872–901 are disordered; it reads DMEVAGSTGDRGAALDIQPAPVRSGPKIGR. Positions 905, 907, 916, and 917 each coordinate Zn(2+).

The protein belongs to the SecA family. Monomer and homodimer. Part of the essential Sec protein translocation apparatus which comprises SecA, SecYEG and auxiliary proteins SecDF-YajC and YidC. It depends on Zn(2+) as a cofactor.

It is found in the cell inner membrane. Its subcellular location is the cytoplasm. The enzyme catalyses ATP + H2O + cellular proteinSide 1 = ADP + phosphate + cellular proteinSide 2.. In terms of biological role, part of the Sec protein translocase complex. Interacts with the SecYEG preprotein conducting channel. Has a central role in coupling the hydrolysis of ATP to the transfer of proteins into and across the cell membrane, serving both as a receptor for the preprotein-SecB complex and as an ATP-driven molecular motor driving the stepwise translocation of polypeptide chains across the membrane. This is Protein translocase subunit SecA from Polynucleobacter asymbioticus (strain DSM 18221 / CIP 109841 / QLW-P1DMWA-1) (Polynucleobacter necessarius subsp. asymbioticus).